The primary structure comprises 237 residues: Ribosomal RNA small subunit methyltransferase G (237 aa).

Residues glycine 78, phenylalanine 83, 129–130, and arginine 148 contribute to the S-adenosyl-L-methionine site; that span reads AE. The segment at 218–237 is disordered; that stretch reads KKETPNKYPRKAGMPNKRPL.

It belongs to the methyltransferase superfamily. RNA methyltransferase RsmG family.

The protein resides in the cytoplasm. In terms of biological role, specifically methylates the N7 position of a guanine in 16S rRNA. This Streptococcus sanguinis (strain SK36) protein is Ribosomal RNA small subunit methyltransferase G.